We begin with the raw amino-acid sequence, 375 residues long: Outer membrane porin C (375 aa).

The first 21 residues, 1-21 (MKVKVLSLLVPALLVAGAANA), serve as a signal peptide directing secretion. The beta stranded transmembrane segment at 22–27 (AEVYNK) threads the bilayer. Over 28–29 (DG) the chain is Periplasmic. A beta stranded membrane pass occupies residues 30–44 (NKLDLYGKVDGLHYF). At 45–50 (SDDKSV) the chain is on the extracellular side. Residues 51 to 66 (DGDQTYMRLGFKGETQ) form a beta stranded membrane-spanning segment. At 67–70 (VTDQ) the chain is on the periplasmic side. Residues 71 to 82 (LTGYGQWEYQIQ) form a beta stranded membrane-spanning segment. The Extracellular segment spans residues 83-91 (GNAPESENN). Residues 92–103 (SWTRVAFAGLKF) traverse the membrane as a beta stranded segment. Residues 104 to 105 (QD) lie on the Periplasmic side of the membrane. Residues 106–113 (IGSFDYGR) form a beta stranded membrane-spanning segment. Over 114–146 (NYGVVYDVTSWTDVLPEFGGDTYGSDNFMQQRG) the chain is Extracellular. Residues 147–156 (NGFATYRNTD) form a beta stranded membrane-spanning segment. Topologically, residues 157–163 (FFGLVDG) are periplasmic. A beta stranded transmembrane segment spans residues 164-172 (LNFAVQYQG). Residues 173-201 (QNGSVSGENDPDFTGHGITNNGRKALRQN) lie on the Extracellular side of the membrane. Residues 202-212 (GDGVGGSITYD) traverse the membrane as a beta stranded segment. Over 213–215 (YEG) the chain is Periplasmic. Residues 216–226 (FGVGAAVSSSK) form a beta stranded membrane-spanning segment. Residues 227-241 (RTWDQNNTGLIGTGD) lie on the Extracellular side of the membrane. Residues 242 to 254 (RAETYTGGLKYDA) form a beta stranded membrane-spanning segment. The Periplasmic portion of the chain corresponds to 255 to 256 (NN). A beta stranded transmembrane segment spans residues 257–267 (IYLAAQYTQTY). Topologically, residues 268 to 279 (NATRVGSLGWAN) are extracellular. Residues 280–292 (KAQNFEAVAQYQF) traverse the membrane as a beta stranded segment. Residues 293 to 294 (DF) lie on the Periplasmic side of the membrane. The beta stranded transmembrane segment at 295 to 309 (GLRPSVAYLQSKGKN) threads the bilayer. The Extracellular segment spans residues 310–320 (LGVVAGRNYDD). Residues 321–335 (EDILKYVDVGATYYF) traverse the membrane as a beta stranded segment. The Periplasmic portion of the chain corresponds to 336-338 (NKN). The chain crosses the membrane as a beta stranded span at residues 339–348 (MSTYVDYKIN). The Extracellular segment spans residues 349–364 (LLDDNQFTRAAGINTD). The chain crosses the membrane as a beta stranded span at residues 365–375 (DIVALGLVYQF).

The protein belongs to the Gram-negative porin family. In terms of assembly, homotrimer. Forms mixed heterotrimers with OmpF; other mixed heterotrimers are also probable. The N- and C-termini are two parts of the same strand. Extracellular loop 3 folds back into the lumen of the barrel forming a constriction zone that controls the pore size, while the trimer interface is formed by the packing of hydrophobic residues on the outer edges of beta strands 1 to 5 and further stabilized by extracellular loop 2 which reaches into the neighboring monomer.

The protein localises to the cell outer membrane. Its function is as follows. Forms pores that allow passive diffusion of small molecules across the outer membrane, including some antibiotics. Variation of the residues in the constriction zone modifies the transverse electric field in the zone, altering antibiotic resistance. (Microbial infection) Is not susceptible to CdiA-EC536-mediated toxicity, which uses OmpC-OmpF heterotrimers of some strains as its outer membrane receptor. Mutagenesis of extracellular loops L4 or L5 of this protein confers susceptibility to the toxin. This Escherichia coli O6:H1 (strain CFT073 / ATCC 700928 / UPEC) protein is Outer membrane porin C (ompC).